Consider the following 173-residue polypeptide: Transcription factor S-II-related protein (173 aa).

A TFIIS central domain is found at 9 to 129; it reads ISDKEREIVI…EETLNQMATV (121 aa). A TFIIS-type zinc finger spans residues 130-170; it reads EWKPCYACKNTSYHFYQLQTRSADEPMTTFYICKNCMKTYK. 4 residues coordinate Zn(2+): cysteine 134, cysteine 137, cysteine 162, and cysteine 165.

This sequence belongs to the TFS-II family.

In Acanthamoeba polyphaga mimivirus (APMV), this protein is Transcription factor S-II-related protein.